Here is a 196-residue protein sequence, read N- to C-terminus: ATP-dependent Clp protease proteolytic subunit (196 aa).

Catalysis depends on serine 99, which acts as the Nucleophile. Histidine 124 is an active-site residue.

Belongs to the peptidase S14 family. As to quaternary structure, fourteen ClpP subunits assemble into 2 heptameric rings which stack back to back to give a disk-like structure with a central cavity, resembling the structure of eukaryotic proteasomes.

Its subcellular location is the cytoplasm. The catalysed reaction is Hydrolysis of proteins to small peptides in the presence of ATP and magnesium. alpha-casein is the usual test substrate. In the absence of ATP, only oligopeptides shorter than five residues are hydrolyzed (such as succinyl-Leu-Tyr-|-NHMec, and Leu-Tyr-Leu-|-Tyr-Trp, in which cleavage of the -Tyr-|-Leu- and -Tyr-|-Trp bonds also occurs).. Its function is as follows. Cleaves peptides in various proteins in a process that requires ATP hydrolysis. Has a chymotrypsin-like activity. Plays a major role in the degradation of misfolded proteins. The chain is ATP-dependent Clp protease proteolytic subunit from Campylobacter lari (strain RM2100 / D67 / ATCC BAA-1060).